The sequence spans 185 residues: Dense granule protein 2 (185 aa).

The first 23 residues, Met1–Ala23, serve as a signal peptide directing secretion. A glycan (N-linked (GlcNAc...) asparagine) is linked at Asn18. 2 disordered regions span residues Gly41–Ala75 and Ala142–Gln185. A compositionally biased stretch (basic and acidic residues) spans Pro43–Glu66.

In terms of processing, may also be O-glycosylated. The N-terminus is blocked.

It localises to the parasitophorous vacuole. Major granular component involved in excreted-secreted antigen (ESA) immunity. Possibly acts in conjunction with GRA1. The polypeptide is Dense granule protein 2 (GRA2) (Toxoplasma gondii).